The sequence spans 297 residues: 4-hydroxy-tetrahydrodipicolinate synthase (297 aa).

T47 contributes to the pyruvate binding site. Y135 acts as the Proton donor/acceptor in catalysis. The active-site Schiff-base intermediate with substrate is the K163. Position 205 (I205) interacts with pyruvate.

It belongs to the DapA family. Homotetramer; dimer of dimers.

It localises to the cytoplasm. The catalysed reaction is L-aspartate 4-semialdehyde + pyruvate = (2S,4S)-4-hydroxy-2,3,4,5-tetrahydrodipicolinate + H2O + H(+). Its pathway is amino-acid biosynthesis; L-lysine biosynthesis via DAP pathway; (S)-tetrahydrodipicolinate from L-aspartate: step 3/4. Catalyzes the condensation of (S)-aspartate-beta-semialdehyde [(S)-ASA] and pyruvate to 4-hydroxy-tetrahydrodipicolinate (HTPA). The polypeptide is 4-hydroxy-tetrahydrodipicolinate synthase (Cytophaga hutchinsonii (strain ATCC 33406 / DSM 1761 / CIP 103989 / NBRC 15051 / NCIMB 9469 / D465)).